Here is a 137-residue protein sequence, read N- to C-terminus: Large ribosomal subunit protein uL16 (137 aa).

The protein belongs to the universal ribosomal protein uL16 family. As to quaternary structure, part of the 50S ribosomal subunit.

Its function is as follows. Binds 23S rRNA and is also seen to make contacts with the A and possibly P site tRNAs. The protein is Large ribosomal subunit protein uL16 of Leuconostoc mesenteroides subsp. mesenteroides (strain ATCC 8293 / DSM 20343 / BCRC 11652 / CCM 1803 / JCM 6124 / NCDO 523 / NBRC 100496 / NCIMB 8023 / NCTC 12954 / NRRL B-1118 / 37Y).